Here is a 359-residue protein sequence, read N- to C-terminus: Molybdenum import ATP-binding protein ModC (359 aa).

One can recognise an ABC transporter domain in the interval 1–229 (MLELNFSQQL…SALRPWLQRE (229 aa)). ATP is bound at residue 31 to 38 (GLSGAGKT). The Mop domain maps to 289–354 (SSSIRNILPV…IKSVSFNRQN (66 aa)).

The protein belongs to the ABC transporter superfamily. Molybdate importer (TC 3.A.1.8) family. In terms of assembly, the complex is composed of two ATP-binding proteins (ModC), two transmembrane proteins (ModB) and a solute-binding protein (ModA).

The protein localises to the cell inner membrane. It catalyses the reaction molybdate(out) + ATP + H2O = molybdate(in) + ADP + phosphate + H(+). Its function is as follows. Part of the ABC transporter complex ModABC involved in molybdenum import. Responsible for energy coupling to the transport system. The chain is Molybdenum import ATP-binding protein ModC from Yersinia pseudotuberculosis serotype I (strain IP32953).